Consider the following 164-residue polypeptide: Putative deoxyuridine 5'-triphosphate nucleotidohydrolase (164 aa).

Substrate is bound at residue 65–67; the sequence is RSG. The residue at position 71 (K71) is an N6-acetyllysine; by host. Substrate-binding positions include 79–82, G90, and 138–139; these read GVVD and YG.

It belongs to the dUTPase family. Requires Mg(2+) as cofactor.

It catalyses the reaction dUTP + H2O = dUMP + diphosphate + H(+). Functionally, this enzyme is involved in nucleotide metabolism: it produces dUMP, the immediate precursor of thymidine nucleotides and it decreases the intracellular concentration of dUTP so that uracil cannot be incorporated into DNA. In Dryophytes versicolor (chameleon treefrog), this protein is Putative deoxyuridine 5'-triphosphate nucleotidohydrolase.